Here is a 278-residue protein sequence, read N- to C-terminus: Formamidopyrimidine-DNA glycosylase (278 aa).

The active-site Schiff-base intermediate with DNA is proline 2. The active-site Proton donor is the glutamate 3. The active-site Proton donor; for beta-elimination activity is the lysine 57. DNA contacts are provided by histidine 90, arginine 109, and lysine 150. An FPG-type zinc finger spans residues 235–269 (QVYGRAGEPCRQCGHPIEIAKHGQRSTFFCRHCQF). Arginine 259 serves as the catalytic Proton donor; for delta-elimination activity.

The protein belongs to the FPG family. As to quaternary structure, monomer. Zn(2+) is required as a cofactor.

The catalysed reaction is Hydrolysis of DNA containing ring-opened 7-methylguanine residues, releasing 2,6-diamino-4-hydroxy-5-(N-methyl)formamidopyrimidine.. It carries out the reaction 2'-deoxyribonucleotide-(2'-deoxyribose 5'-phosphate)-2'-deoxyribonucleotide-DNA = a 3'-end 2'-deoxyribonucleotide-(2,3-dehydro-2,3-deoxyribose 5'-phosphate)-DNA + a 5'-end 5'-phospho-2'-deoxyribonucleoside-DNA + H(+). Functionally, involved in base excision repair of DNA damaged by oxidation or by mutagenic agents. Acts as a DNA glycosylase that recognizes and removes damaged bases. Has a preference for oxidized purines, such as 7,8-dihydro-8-oxoguanine (8-oxoG). Has AP (apurinic/apyrimidinic) lyase activity and introduces nicks in the DNA strand. Cleaves the DNA backbone by beta-delta elimination to generate a single-strand break at the site of the removed base with both 3'- and 5'-phosphates. This Yersinia pestis (strain Pestoides F) protein is Formamidopyrimidine-DNA glycosylase.